The primary structure comprises 444 residues: Glutamyl-tRNA reductase (444 aa).

Residues 49–52, serine 109, 114–116, and glutamine 120 each bind substrate; these read TCNR and ETQ. Cysteine 50 functions as the Nucleophile in the catalytic mechanism. 189–194 is an NADP(+) binding site; it reads GAGKMG.

Belongs to the glutamyl-tRNA reductase family. As to quaternary structure, homodimer.

The catalysed reaction is (S)-4-amino-5-oxopentanoate + tRNA(Glu) + NADP(+) = L-glutamyl-tRNA(Glu) + NADPH + H(+). Its pathway is porphyrin-containing compound metabolism; protoporphyrin-IX biosynthesis; 5-aminolevulinate from L-glutamyl-tRNA(Glu): step 1/2. Its function is as follows. Catalyzes the NADPH-dependent reduction of glutamyl-tRNA(Glu) to glutamate 1-semialdehyde (GSA). The sequence is that of Glutamyl-tRNA reductase from Bacillus cereus (strain G9842).